A 572-amino-acid polypeptide reads, in one-letter code: Protein misato homolog 1 (572 aa).

The protein belongs to the misato family.

It is found in the mitochondrion outer membrane. Its subcellular location is the cytoplasm. Its function is as follows. Involved in the regulation of mitochondrial distribution and morphology. Required for mitochondrial fusion and mitochondrial network formation. The chain is Protein misato homolog 1 (MSTO1) from Bos taurus (Bovine).